A 210-amino-acid polypeptide reads, in one-letter code: Protein GrpE (210 aa).

The interval 1–42 is disordered; it reads MANEERTIPETNVASERPEDPVESQTRAEGGEQIQEAAPETA.

Belongs to the GrpE family. Homodimer.

Its subcellular location is the cytoplasm. Functionally, participates actively in the response to hyperosmotic and heat shock by preventing the aggregation of stress-denatured proteins, in association with DnaK and GrpE. It is the nucleotide exchange factor for DnaK and may function as a thermosensor. Unfolded proteins bind initially to DnaJ; upon interaction with the DnaJ-bound protein, DnaK hydrolyzes its bound ATP, resulting in the formation of a stable complex. GrpE releases ADP from DnaK; ATP binding to DnaK triggers the release of the substrate protein, thus completing the reaction cycle. Several rounds of ATP-dependent interactions between DnaJ, DnaK and GrpE are required for fully efficient folding. The sequence is that of Protein GrpE from Nitrosococcus oceani (strain ATCC 19707 / BCRC 17464 / JCM 30415 / NCIMB 11848 / C-107).